The sequence spans 311 residues: Short chain dehydrogenase opdN (311 aa).

Positions 48, 73, 96, 123, 217, and 221 each coordinate NADP(+). Y217 (proton donor) is an active-site residue. The active-site Lowers pKa of active site Tyr is the K221.

This sequence belongs to the short-chain dehydrogenases/reductases (SDR) family.

It participates in secondary metabolite biosynthesis. Short chain dehydrogenase; part of the gene cluster that mediates the biosynthesis of oxopyrrolidines, polyketide-amino acid hybrid compounds with feature structures of tetramic acid. Does not seem to play a role in oxopyrrolidines A and B biosynthesis. May be involved in further modifications of these oxopyrrolidines. This is Short chain dehydrogenase opdN from Penicillium oxalicum (strain 114-2 / CGMCC 5302) (Penicillium decumbens).